An 82-amino-acid polypeptide reads, in one-letter code: MNPLIASASVLAAALAIGLASLGPGLAQGNASGQALEGIARQPEAEGKIRGTLLLSLAFMESLTIYGLVIALVLLFANPFAS.

Helical transmembrane passes span 3–23 and 57–77; these read PLIA…ASLG and LAFM…LLFA.

As to quaternary structure, F-type ATPases have 2 components, F(1) - the catalytic core - and F(0) - the membrane proton channel. F(1) has five subunits: alpha(3), beta(3), gamma(1), delta(1), epsilon(1). F(0) has four main subunits: a(1), b(1), b'(1) and c(10-14). The alpha and beta chains form an alternating ring which encloses part of the gamma chain. F(1) is attached to F(0) by a central stalk formed by the gamma and epsilon chains, while a peripheral stalk is formed by the delta, b and b' chains.

Its subcellular location is the cellular thylakoid membrane. With respect to regulation, inhibited by dicyclohexylcarbodiimide. F(1)F(0) ATP synthase produces ATP from ADP in the presence of a proton or sodium gradient. F-type ATPases consist of two structural domains, F(1) containing the extramembraneous catalytic core and F(0) containing the membrane proton channel, linked together by a central stalk and a peripheral stalk. During catalysis, ATP synthesis in the catalytic domain of F(1) is coupled via a rotary mechanism of the central stalk subunits to proton translocation. Its function is as follows. Key component of the F(0) channel; it plays a direct role in translocation across the membrane. A homomeric c-ring of between 10-14 subunits forms the central stalk rotor element with the F(1) delta and epsilon subunits. Functionally, the complex from the organism is particularly stable to disruption and remains functional after 6 hrs at 55 degrees Celsius. This is ATP synthase subunit c (atpE) from Thermosynechococcus vestitus (strain NIES-2133 / IAM M-273 / BP-1).